The following is a 508-amino-acid chain: Photosystem II CP47 reaction center protein (508 aa).

Transmembrane regions (helical) follow at residues 21 to 36 (AVHIMHTALVSGWAGS), 101 to 115 (IVFSGLCFLAAIWHW), 140 to 156 (GIHLFLAGVACFGFGAF), 203 to 218 (IAAGTLGILAGLFHLS), 237 to 252 (VLSSSIAAVFFAAFVV), and 457 to 472 (TFALLFFFGHIWHGAR).

This sequence belongs to the PsbB/PsbC family. PsbB subfamily. PSII is composed of 1 copy each of membrane proteins PsbA, PsbB, PsbC, PsbD, PsbE, PsbF, PsbH, PsbI, PsbJ, PsbK, PsbL, PsbM, PsbT, PsbX, PsbY, PsbZ, Psb30/Ycf12, at least 3 peripheral proteins of the oxygen-evolving complex and a large number of cofactors. It forms dimeric complexes. The cofactor is Binds multiple chlorophylls. PSII binds additional chlorophylls, carotenoids and specific lipids..

Its subcellular location is the plastid. It localises to the chloroplast thylakoid membrane. Its function is as follows. One of the components of the core complex of photosystem II (PSII). It binds chlorophyll and helps catalyze the primary light-induced photochemical processes of PSII. PSII is a light-driven water:plastoquinone oxidoreductase, using light energy to abstract electrons from H(2)O, generating O(2) and a proton gradient subsequently used for ATP formation. This is Photosystem II CP47 reaction center protein from Lolium perenne (Perennial ryegrass).